The primary structure comprises 494 residues: Lysine--tRNA ligase (494 aa).

Residues Glu-399 and Glu-406 each contribute to the Mg(2+) site.

The protein belongs to the class-II aminoacyl-tRNA synthetase family. Mg(2+) serves as cofactor.

Its subcellular location is the cytoplasm. It catalyses the reaction tRNA(Lys) + L-lysine + ATP = L-lysyl-tRNA(Lys) + AMP + diphosphate. This is Lysine--tRNA ligase (lysS) from Saccharolobus solfataricus (strain ATCC 35092 / DSM 1617 / JCM 11322 / P2) (Sulfolobus solfataricus).